The primary structure comprises 408 residues: 1-deoxy-D-xylulose 5-phosphate reductoisomerase (408 aa).

Residues Thr-19, Gly-20, Ser-21, Ile-22, Gly-45, Asn-47, and Asn-130 each coordinate NADPH. Lys-131 serves as a coordination point for 1-deoxy-D-xylulose 5-phosphate. Residue Glu-132 participates in NADPH binding. A Mn(2+)-binding site is contributed by Asp-156. The 1-deoxy-D-xylulose 5-phosphate site is built by Ser-157, Glu-158, Ser-182, and His-205. Position 158 (Glu-158) interacts with Mn(2+). Gly-211 provides a ligand contact to NADPH. The 1-deoxy-D-xylulose 5-phosphate site is built by Ser-218, Asn-223, Lys-224, and Glu-227. A Mn(2+)-binding site is contributed by Glu-227.

Belongs to the DXR family. Mg(2+) serves as cofactor. Requires Mn(2+) as cofactor.

It carries out the reaction 2-C-methyl-D-erythritol 4-phosphate + NADP(+) = 1-deoxy-D-xylulose 5-phosphate + NADPH + H(+). It participates in isoprenoid biosynthesis; isopentenyl diphosphate biosynthesis via DXP pathway; isopentenyl diphosphate from 1-deoxy-D-xylulose 5-phosphate: step 1/6. Its function is as follows. Catalyzes the NADPH-dependent rearrangement and reduction of 1-deoxy-D-xylulose-5-phosphate (DXP) to 2-C-methyl-D-erythritol 4-phosphate (MEP). In Gluconobacter oxydans (strain 621H) (Gluconobacter suboxydans), this protein is 1-deoxy-D-xylulose 5-phosphate reductoisomerase.